A 100-amino-acid polypeptide reads, in one-letter code: Protein Vpr (100 aa).

The homooligomerization stretch occupies residues 1–42 (MEQALENQGPAREPFNEWTLELLEELKEEAVRHFPRPWLQAC). Ser-79, Ser-98, and Ser-100 each carry phosphoserine; by host.

It belongs to the HIV-1 VPR protein family. As to quaternary structure, homooligomer, may form homodimer. Interacts with p6-gag region of the Pr55 Gag precursor protein through a (Leu-X-X)4 motif near the C-terminus of the P6gag protein. Interacts with host UNG. May interact with host RAD23A/HHR23A. Interacts with host VPRBP/DCAF1, leading to hijack the CUL4A-RBX1-DDB1-DCAF1/VPRBP complex, mediating ubiquitination of host proteins such as TERT and ZGPAT and arrest of the cell cycle in G2 phase. Phosphorylated on several residues by host. These phosphorylations regulate VPR activity for the nuclear import of the HIV-1 pre-integration complex.

The protein resides in the virion. It localises to the host nucleus. It is found in the host extracellular space. In terms of biological role, during virus replication, may deplete host UNG protein, and incude G2-M cell cycle arrest. Acts by targeting specific host proteins for degradation by the 26S proteasome, through association with the cellular CUL4A-DDB1 E3 ligase complex by direct interaction with host VPRPB/DCAF-1. Cell cycle arrest reportedly occurs within hours of infection and is not blocked by antiviral agents, suggesting that it is initiated by the VPR carried into the virion. Additionally, VPR induces apoptosis in a cell cycle dependent manner suggesting that these two effects are mechanistically linked. Detected in the serum and cerebrospinal fluid of AIDS patient, VPR may also induce cell death to bystander cells. Functionally, during virus entry, plays a role in the transport of the viral pre-integration (PIC) complex to the host nucleus. This function is crucial for viral infection of non-dividing macrophages. May act directly at the nuclear pore complex, by binding nucleoporins phenylalanine-glycine (FG)-repeat regions. The sequence is that of Protein Vpr from Human immunodeficiency virus type 1 group O (isolate MVP5180) (HIV-1).